We begin with the raw amino-acid sequence, 757 residues long: uncharacterized protein (757 aa).

In terms of domain architecture, S1 motif spans 640-709; that stretch reads GMILEGVVSN…ARKRIALTMR (70 aa). The segment covering 710–741 has biased composition (basic and acidic residues); sequence LDDEPGGAKHKMPSENRSRERTAGRKPQRNDR. The disordered stretch occupies residues 710–757; that stretch reads LDDEPGGAKHKMPSENRSRERTAGRKPQRNDRAPANSAMADAFAKLKR.

This is an uncharacterized protein from Neisseria meningitidis serogroup A / serotype 4A (strain DSM 15465 / Z2491).